The sequence spans 535 residues: MTREHQGGTRGLAAARKGFWSGLRFTSLRLRLVLVFGLVALTAAVSASGIAYWLNREAVLTRTQDAVLRDFEQEMQNRAGALPEHPTQDEVQHTAGQMANSSQRFSVLLVAENADGTAVYGSSGGLGGVALSDVPESLRTAVNKEQKLTSANKHPYHLYWQRITDDGTPYLVAGTKVIGGGPTGYMLKSLEPEAKDLNSLAWSLGIATALALLGSALLAQALATTVLKPVHRLGVAARRLGEGKLDTRLRVSGTDELADLSRTFNSAAENLEKRVADMAGREQASRRFVADMSHELRTPLTALTAVTEVLEEELEYAGEGEGEGGSFDPMVEPAVRLVVSETRRLNDLVENLMEVTRFDAGTARLVLDDVDVADQITACIDARAWLDAVDLDAERGVHARLDPRRLDVILANLIGNALKHGGSPVRVSVARADHEIVIRVRDNGPGIPEDVLPHVFDRFYKASASRPRSEGSGLGLSIALENAHIHGGEITAENAPEGGAVFTLRLPQDPSPPADEDGGPDEETEDRGKDAKGQV.

Residues 1–30 (MTREHQGGTRGLAAARKGFWSGLRFTSLRL) are Cytoplasmic-facing. A helical transmembrane segment spans residues 31–52 (RLVLVFGLVALTAAVSASGIAY). Topologically, residues 53–198 (WLNREAVLTR…SLEPEAKDLN (146 aa)) are extracellular. Residues 199–219 (SLAWSLGIATALALLGSALLA) traverse the membrane as a helical segment. The Cytoplasmic segment spans residues 220-535 (QALATTVLKP…DRGKDAKGQV (316 aa)). Residues 224 to 276 (TTVLKPVHRLGVAARRLGEGKLDTRLRVSGTDELADLSRTFNSAAENLEKRVA) enclose the HAMP domain. The 220-residue stretch at 291-510 (DMSHELRTPL…VFTLRLPQDP (220 aa)) folds into the Histidine kinase domain. A Phosphohistidine modification is found at histidine 294. Residues 493–535 (ENAPEGGAVFTLRLPQDPSPPADEDGGPDEETEDRGKDAKGQV) form a disordered region. The span at 514–525 (ADEDGGPDEETE) shows a compositional bias: acidic residues. Residues 526 to 535 (DRGKDAKGQV) show a composition bias toward basic and acidic residues.

It is found in the cell membrane. The enzyme catalyses ATP + protein L-histidine = ADP + protein N-phospho-L-histidine.. Forms part of a two-component regulatory system AfsQ1/AfsQ2 involved in secondary metabolism. May activate AfsQ1 by phosphorylation. This is Signal transduction histidine-protein kinase AfsQ2 (afsQ2) from Streptomyces coelicolor (strain ATCC BAA-471 / A3(2) / M145).